Reading from the N-terminus, the 313-residue chain is Non-structural protein 3 (313 aa).

An RNA-binding region spans residues 1 to 149 (MLKMESTQQM…TRLMKDKIEG (149 aa)). Residues 150-206 (GEVEVDDSYVDEKMEIDTIDWKSRYDQLEKRFEALKQRVNEKYNTWVQKAKKVNENM) are dimerization. Residues 166–237 (DTIDWKSRYD…NKLEADLQGK (72 aa)) adopt a coiled-coil conformation. The interaction with host ZC3H7B stretch occupies residues 170–234 (WKSRYDQLEK…QYCNKLEADL (65 aa)). The interaction with host EIF4G1 stretch occupies residues 208–313 (SLQNVISQQQ…KQCNYEYAYE (106 aa)).

It belongs to the rotavirus NSP3 family. As to quaternary structure, homodimer. Interacts (via the coiled-coil region) with host ZC3H7B (via LD motif). Interacts with host EIF4G1.

Its subcellular location is the host cytoplasm. Plays an important role in stimulating the translation of viral mRNAs. These mRNAs are capped but not polyadenylated, instead terminating in a conserved sequence 'GACC' at the 3' that is recognized by NSP3, which competes with host PABPC1 for EIF4G1 binding. The interaction between NSP3 and host EIF4G1 stabilizes the EIF4E-EIF4G1 interaction, thereby facilitating the initiation of capped mRNA translation. The chain is Non-structural protein 3 from Homo sapiens (Human).